The following is a 345-amino-acid chain: Prenyltransferase ltmC (345 aa).

A substrate-binding site is contributed by His112. 2 residues coordinate Mg(2+): Asp119 and Asp123. Arg128 is a substrate binding site. A glycan (N-linked (GlcNAc...) asparagine) is linked at Asn130. 5 residues coordinate substrate: Lys212, Thr213, Gln243, Asn250, and Lys260.

It belongs to the FPP/GGPP synthase family. Requires Mg(2+) as cofactor.

It functions in the pathway secondary metabolite biosynthesis. Prenyltransferase; part of the gene cluster that mediates the biosynthesis of lolitrems, indole-diterpene mycotoxins that are potent tremorgens in mammals, and are synthesized by clavicipitaceous fungal endophytes in association with their grass hosts. The geranylgeranyl diphosphate (GGPP) synthase ltmG is proposed to catalyze the first step in lolitrem biosynthesis. LtmG catalyzes a series of iterative condensations of isopentenyl diphosphate (IPP) with dimethylallyl diphosphate (DMAPP), geranyl diphosphate (GPP), and farnesyl diphosphate (FPP), to form GGPP. GGPP then condenses with indole-3-glycerol phosphate to form 3-geranylgeranylindole, an acyclic intermediate, to be incorporated into paxilline. Either ltmG or ltmC could be responsible for this step, as both are putative prenyl transferases. The FAD-dependent monooxygenase ltmM then catalyzes the epoxidation of the two terminal alkenes of the geranylgeranyl moiety, which is subsequently cyclized by ltmB, to paspaline. The cytochrome P450 monooxygenases ltmQ and ltmP can sequentially oxidize paspaline to terpendole E and terpendole F. Alternatively, ltmP converts paspaline to an intermediate which is oxidized by ltmQ to terpendole F. LtmF, ltmK, ltmE and ltmJ appear to be unique to the epichloe endophytes. The prenyltransferase ltmF is involved in the 27-hydroxyl-O-prenylation. The cytochrome P450 monooxygenase ltmK is required for the oxidative acetal ring formation. The multi-functional prenyltransferase ltmE is required for C20- and C21-prenylations of the indole ring of paspalanes and acts together with the cytochrome P450 monooxygenase ltmJ to yield lolitremanes by multiple oxidations and ring closures. The stereoisomer pairs of lolitriol and lolitrem N or lolitrem B and lolitrem F may be attributed to variations in the way in which ring closure can occur under the action of ltmJ. While the major product of this pathway is lolitrem B, the prenyl transferases and cytochrome P450 monooxygenases identified in this pathway have a remarkable versatility in their regio- and stereo-specificities to generate a diverse range of metabolites that are products of a metabolic grid rather than a linear pathway. The sequence is that of Prenyltransferase ltmC from Epichloe festucae var. lolii (Neotyphodium lolii).